The primary structure comprises 401 residues: Ureide permease 4 (401 aa).

Residues 1–10 (MYVVESKAGA) are Extracellular-facing. A helical membrane pass occupies residues 11-31 (IGCMILSLCCLGSWPAILTLL). The Cytoplasmic portion of the chain corresponds to 32-40 (ERRGRLPQH). The helical transmembrane segment at 41–61 (TFLDFATANLLAAIVIAFSLG) threads the bilayer. Residues 62–81 (EIGKSTFLKPDFTTQLPQDN) are Extracellular-facing. The helical transmembrane segment at 82 to 102 (WPSVLLAVAGGVLLSIGNLAT) threads the bilayer. Residues 103 to 104 (QY) lie on the Cytoplasmic side of the membrane. A helical membrane pass occupies residues 105–125 (AFAFVGLSVTEVITASITVVI). Over 126 to 141 (GTTLNYFLDNKINKAE) the chain is Extracellular. A helical membrane pass occupies residues 142-162 (ILFPGVGCFLIAVFLGAAVHA). Residues 163-231 (SNAADVKEKL…KRAIKVFGKS (69 aa)) lie on the Cytoplasmic side of the membrane. 224–231 (AIKVFGKS) is a binding site for ATP. A helical transmembrane segment spans residues 232 to 252 (IMIGLFITLFAGISLSLFSPA). The Extracellular segment spans residues 253–275 (FNLATNDQWSTLPKGVPKLVVYT). The chain crosses the membrane as a helical span at residues 276–296 (AFFYFSIAGFLISLILNLIFL). At 297 to 318 (YRPMVGLARSSLKKYIYDSKGR) the chain is on the cytoplasmic side. The helical transmembrane segment at 319–339 (GWAVFAGFLCGFGNGLQFMGG) threads the bilayer. Topologically, residues 340–344 (QAAGY) are extracellular. Residues 345 to 365 (AAADSVQALPLVSTFWGIVLF) traverse the membrane as a helical segment. Over 366–374 (GEYRKSSKR) the chain is Cytoplasmic. The chain crosses the membrane as a helical span at residues 375–395 (TYALLVSMLAMFVAAVAILMA). At 396–401 (SSGHRK) the chain is on the extracellular side.

This sequence belongs to the plant ureide permease (TC 2.A.7.19) family. In terms of tissue distribution, expressed in developing seedlings, flower filaments and stigma, and the top and bottom parts of carpels in siliques.

Its subcellular location is the membrane. Its function is as follows. Proton-coupled transporter that transports a wide spectrum of oxo derivatives of heterocyclic nitrogen compounds. The chain is Ureide permease 4 from Arabidopsis thaliana (Mouse-ear cress).